The primary structure comprises 940 residues: Inter-alpha-trypsin inhibitor heavy chain H5 (940 aa).

A signal peptide spans 1–16 (MLPLLGLCFALPLCAG). One can recognise a VIT domain in the interval 35–161 (IPRQVRLLQR…KAAFLLSYEE (127 aa)). Asn-97 and Asn-127 each carry an N-linked (GlcNAc...) asparagine glycan. Positions 207 to 227 (NSRQRGSGRGPDDSGPPPSTV) are disordered. N-linked (GlcNAc...) asparagine glycans are attached at residues Asn-231, Asn-421, Asn-508, Asn-694, Asn-778, and Asn-795. Positions 295-478 (NVVFVLDSSA…AQLIGFYDEI (184 aa)) constitute a VWFA domain.

This sequence belongs to the ITIH family.

It is found in the secreted. Its function is as follows. May act as a tumor suppressor. The chain is Inter-alpha-trypsin inhibitor heavy chain H5 (ITIH5) from Bos taurus (Bovine).